Here is a 339-residue protein sequence, read N- to C-terminus: Anthranilate phosphoribosyltransferase (339 aa).

5-phospho-alpha-D-ribose 1-diphosphate is bound by residues Gly-81, 84-85, Ser-89, 91-94, 109-117, and Ala-121; these read GD, NVST, and KHGNRALSS. Anthranilate is bound at residue Gly-81. Residue Ser-93 coordinates Mg(2+). Asn-112 serves as a coordination point for anthranilate. Position 167 (Arg-167) interacts with anthranilate. Mg(2+)-binding residues include Asp-226 and Glu-227.

Belongs to the anthranilate phosphoribosyltransferase family. In terms of assembly, homodimer. The cofactor is Mg(2+).

It catalyses the reaction N-(5-phospho-beta-D-ribosyl)anthranilate + diphosphate = 5-phospho-alpha-D-ribose 1-diphosphate + anthranilate. Its pathway is amino-acid biosynthesis; L-tryptophan biosynthesis; L-tryptophan from chorismate: step 2/5. In terms of biological role, catalyzes the transfer of the phosphoribosyl group of 5-phosphorylribose-1-pyrophosphate (PRPP) to anthranilate to yield N-(5'-phosphoribosyl)-anthranilate (PRA). The protein is Anthranilate phosphoribosyltransferase of Rhodopseudomonas palustris (strain BisA53).